The primary structure comprises 331 residues: Probable 5-dehydro-4-deoxyglucarate dehydratase 2 (331 aa).

Residues 1-23 are disordered; the sequence is MSADTDTDTDTGTGTGPDTDTGT. The segment covering 10–23 has biased composition (low complexity); it reads DTGTGTGPDTDTGT.

The protein belongs to the DapA family.

The enzyme catalyses 5-dehydro-4-deoxy-D-glucarate + H(+) = 2,5-dioxopentanoate + CO2 + H2O. It participates in carbohydrate acid metabolism; D-glucarate degradation; 2,5-dioxopentanoate from D-glucarate: step 2/2. The sequence is that of Probable 5-dehydro-4-deoxyglucarate dehydratase 2 from Streptomyces avermitilis (strain ATCC 31267 / DSM 46492 / JCM 5070 / NBRC 14893 / NCIMB 12804 / NRRL 8165 / MA-4680).